Consider the following 420-residue polypeptide: Serine protease inhibitor A3B (420 aa).

An N-terminal signal peptide occupies residues 1–17 (MAFIAALGLLMAEICPA). Asn104 and Asn349 each carry an N-linked (GlcNAc...) asparagine glycan. Residues 367-392 (GTEGDAITIVGYNFMSAKLKPVFVKF) are RCL.

The protein belongs to the serpin family.

It localises to the secreted. This is Serine protease inhibitor A3B (Serpina3b) from Mus musculus (Mouse).